A 574-amino-acid chain; its full sequence is MLRASASGAKCAVKLIVPLHRGFIVRSDIIPLRLRDSEYVESAVSFAEPLQTYSGKKVAISSRSDLTTYFAAAAAGLILRQGSTHASDAGSQALFQMVESDLANRLSFPWIQPGTPRRRTLALVDANSSHPQDGLGFYRAARELGINVVVLENAGHWLEDPAQAHWREAFIPTRLTNPPEEDVGDHILASLRAYGKPVDGIVTFADSFWYYIARIAHEIGVETAPPDSMRIATNKFLTSKYVGHDAYLASNVDEALRIAKEVALPYPLIVKPCDGWSSEGVSRVESPDAFPAAVKSIDTSRHGTEFVMEPYCDGPEVDVNLVLLDGEVLFAEICDDLPKSADVNGLTVGSLTNFHELYSVYPSALPSKELELLIHSFVDTLLRLGIRNGVMHLEGRVQNSSMEYREQNRMMHLQPRAPQATRPEPSAWLIEINPRPLGMTGSHIIESTYGIDYWGLAAVLGVGDKDRARALSQPYRDGPQYTCVMVFIPADFPPSSQGIFDTDDICADLLARRPDLAQHISRCATLVRRGQKVAHPTTGRHTFLAYFNVFSRAGREEALDLARQVREEVRYSFL.

An ATP-grasp domain is found at 234 to 462; that stretch reads NKFLTSKYVG…YWGLAAVLGV (229 aa). 263–318 lines the ATP pocket; that stretch reads ALPYPLIVKPCDGWSSEGVSRVESPDAFPAAVKSIDTSRHGTEFVMEPYCDGPEVD. 3 residues coordinate Mg(2+): Glu394, Glu431, and Asn433. Residues Glu394, Glu431, and Asn433 each contribute to the Mn(2+) site.

Mg(2+) is required as a cofactor. Mn(2+) serves as cofactor.

It functions in the pathway secondary metabolite biosynthesis. Functionally, ATP-grasp enzyme; part of the gene cluster that mediates the biosynthesis of the isoquinoline alkaloids fumisoquin A, fumisoquin B and fumisoquin C; as well as small amounts of fumipyrrole as a shunt metabolite. The products of the cluster lead to a brown coloration and are important for growth and conidiation. The nonribosomal peptide synthetase-like protein fsqF, which lacks a canonical condensation domain, is required for addition of a serine-derived dehydroalanine moiety to activated tyrosine but is not essential for the subsequent steps leading to isoquinoline formation. A different enzyme, most likely the ATP-grasp enzyme fsqD, is responsible for activation of tyrosine. Three additional enzymes encoded by the fsq cluster, the N-methyltransferase fsqC, the phenol 2-monooxygenase fsqG and the FAD-dependent oxidase fsqB, catalyze the formation of the isoquinoline ring system in the fumisoquins. FsqB converts the fspF thiolation domain-bound (2S,4S,5S)-2-amino-6-(3,4-dihydroxyphenyl)-4-hydroxy-5-(methylamino)hexanoyl into isoquinoline. The cyclization most likely proceeds via a two-step mechanism, beginning with FAD-dependent oxidation of the methyl group to an iminium species followed by electrophilic attack on the deprotonated phenol. This is ATP-grasp enzyme fsqD from Aspergillus fumigatus (strain ATCC MYA-4609 / CBS 101355 / FGSC A1100 / Af293) (Neosartorya fumigata).